Reading from the N-terminus, the 105-residue chain is Ketoisovalerate oxidoreductase subunit VorD (105 aa).

2 4Fe-4S ferredoxin-type domains span residues 44 to 73 (FMPVIDESKCVKCYICWKFCPEPAIYIKED) and 74 to 103 (GFVAIDYDYCKGCGICANECPTKAITMVRE). Residues Cys53, Cys56, Cys59, Cys63, Cys83, Cys86, Cys89, and Cys93 each contribute to the [4Fe-4S] cluster site.

Heterotetramer of one alpha, one beta, one delta and one gamma chain. Requires [4Fe-4S] cluster as cofactor.

The catalysed reaction is 3-methyl-2-oxobutanoate + 2 oxidized [2Fe-2S]-[ferredoxin] + CoA = 2-methylpropanoyl-CoA + 2 reduced [2Fe-2S]-[ferredoxin] + CO2 + H(+). This is Ketoisovalerate oxidoreductase subunit VorD (vorD) from Pyrococcus abyssi (strain GE5 / Orsay).